The sequence spans 217 residues: GTP cyclohydrolase 1 (217 aa).

Zn(2+)-binding residues include C109, H112, and C180.

This sequence belongs to the GTP cyclohydrolase I family. As to quaternary structure, toroid-shaped homodecamer, composed of two pentamers of five dimers.

It catalyses the reaction GTP + H2O = 7,8-dihydroneopterin 3'-triphosphate + formate + H(+). It functions in the pathway cofactor biosynthesis; 7,8-dihydroneopterin triphosphate biosynthesis; 7,8-dihydroneopterin triphosphate from GTP: step 1/1. This is GTP cyclohydrolase 1 from Photobacterium profundum (strain SS9).